Here is a 1113-residue protein sequence, read N- to C-terminus: MNDWQWLKNRLVNAKTKAVSFWLAQTTSTILDIAELIKCCSDLKNTSINGLVDLINQQEKLEFNLTRLKEIDGEDARQLFGIEGNVYKHFQTELSRFYKQTRKHFRETGSESLFLGLPVIEGINEFNDVFRAPLLYVGVKLKVAPRLERFWLEINREEIFLNPTIIGVEINKRNSLFKNNYDTTKVDINQALEIFRELEYQFRMPLTSELKSFSKKAKSDFNTEKRTNFLTNNVLLGIFDVKGDQLFQNFNEILNTDPDVLDELLKDRRDLLYDNREFRENFNLKGTYLFSHLDIFQQYAVKQAFDGDVIIEGPPGTGKSETIVNILVNLALNKKKVLFVSEKVTALDVVYNRLGSFKHIALFNASVASEKKRFYSQFADYESFFTDNFSKKDLVNEMPVFDGQWVDKILSEFTNLQNIYDTQINSGNQSYSFKEILSSFPILDVSYIKIKEHDRFDEWVRVFSSQVWLEKHLTYLAFKAELSKRWQNIDNFYALKDLLEKRKNIRVLCYVLDYFEQNNSIIKPKRVLLYTPTERGQKQLHQLQQDVAKYNSLQRFKSAAKFETIKLNLANKLAQNAKPFFFSWFIQTHAQTLLENLVQTQKQLVKAKQSYLSKIEQYVVSCKRILKATILANFFELYQTNKNELLDICREAKNPVLKEITWWFKKNFALLSKLFPVHIMTFESAALLTPNQRRLYDYVVIDEASQVYLERAIPILYRGAKYIIAGDTKQLKPSNFFQARAEYDVDEEFEDGNVEAAVHSTSLLHFLKNRSRILTLLKFHYRSDSANLIAFTNNRIYNNELIFMNKATADKQVFIVHDVIDGIWRNNRNLQEARDVVQRLEQLTQTAEYQKSLGVICFNKNQAELIEYMIDKQNNPLLNEWRDRVNAQGEYVGLFVKNIENVQGDERDIIIFSLGYDRSVNSYGPISKQGGENRLNVAITRAKQRIELFKTNRASDYNGLSSNSLGSKLLVEYLLYCEAMANNQGESLDFQATQKQAPKAKYELELENQFFNELELIFGEQFTIKRNVNEGAYSFSFVFYFNENPYLAVDFNPALPHSRKEVSENIIYREQFLKKRKWNLVNIWLDEWKLNPGGVLQKLRNCLTHSENEFEEI.

Residue 313–320 (GPPGTGKS) coordinates ATP.

It belongs to the DNA2/NAM7 helicase family.

This is an uncharacterized protein from Mycoplasma pneumoniae (strain ATCC 29342 / M129 / Subtype 1) (Mycoplasmoides pneumoniae).